The sequence spans 224 residues: uncharacterized protein (224 aa).

The next 5 membrane-spanning stretches (helical) occupy residues 32-52, 60-80, 100-120, 130-150, and 162-182; these read ILTLCQLLSPSMLVLHYPLVV, LFTNYLYAGTGFDFIMNIYFF, IIYLVKVALLIDAFSLISGLG, AIAYNWSLFNSFSKIQFLFGF, and LGFSFLTGGLPSLVVLGFGII.

Belongs to the derlin family.

It localises to the endoplasmic reticulum membrane. This is an uncharacterized protein from Schizosaccharomyces pombe (strain 972 / ATCC 24843) (Fission yeast).